We begin with the raw amino-acid sequence, 89 residues long: Small ribosomal subunit protein bS16c (89 aa).

This sequence belongs to the bacterial ribosomal protein bS16 family.

The protein resides in the plastid. Its subcellular location is the chloroplast. This Drimys granadensis protein is Small ribosomal subunit protein bS16c.